The following is a 476-amino-acid chain: Bifunctional protein GlmU (476 aa).

The tract at residues 1–235 (MTALDIIIMA…ALQVAGVNSP (235 aa)) is pyrophosphorylase. Residues K23, Q81, 86 to 87 (GT), 108 to 110 (SGD), G145, E160, and N233 each bind UDP-N-acetyl-alpha-D-glucosamine. D110 is a binding site for Mg(2+). N233 is a Mg(2+) binding site. The linker stretch occupies residues 236-256 (AQLAELERAHQRAQAAALMEQ). Residues 257 to 476 (GVRLADPARF…WKRPAKQAKG (220 aa)) form an N-acetyltransferase region. Positions 351 and 369 each coordinate UDP-N-acetyl-alpha-D-glucosamine. Residue H381 is the Proton acceptor of the active site. UDP-N-acetyl-alpha-D-glucosamine is bound by residues Y384 and N395. Residues A398, 404-405 (NY), S423, G441, and R458 contribute to the acetyl-CoA site.

This sequence in the N-terminal section; belongs to the N-acetylglucosamine-1-phosphate uridyltransferase family. It in the C-terminal section; belongs to the transferase hexapeptide repeat family. In terms of assembly, homotrimer. The cofactor is Mg(2+).

It is found in the cytoplasm. The enzyme catalyses alpha-D-glucosamine 1-phosphate + acetyl-CoA = N-acetyl-alpha-D-glucosamine 1-phosphate + CoA + H(+). It catalyses the reaction N-acetyl-alpha-D-glucosamine 1-phosphate + UTP + H(+) = UDP-N-acetyl-alpha-D-glucosamine + diphosphate. It functions in the pathway nucleotide-sugar biosynthesis; UDP-N-acetyl-alpha-D-glucosamine biosynthesis; N-acetyl-alpha-D-glucosamine 1-phosphate from alpha-D-glucosamine 6-phosphate (route II): step 2/2. The protein operates within nucleotide-sugar biosynthesis; UDP-N-acetyl-alpha-D-glucosamine biosynthesis; UDP-N-acetyl-alpha-D-glucosamine from N-acetyl-alpha-D-glucosamine 1-phosphate: step 1/1. Its pathway is bacterial outer membrane biogenesis; LPS lipid A biosynthesis. Functionally, catalyzes the last two sequential reactions in the de novo biosynthetic pathway for UDP-N-acetylglucosamine (UDP-GlcNAc). The C-terminal domain catalyzes the transfer of acetyl group from acetyl coenzyme A to glucosamine-1-phosphate (GlcN-1-P) to produce N-acetylglucosamine-1-phosphate (GlcNAc-1-P), which is converted into UDP-GlcNAc by the transfer of uridine 5-monophosphate (from uridine 5-triphosphate), a reaction catalyzed by the N-terminal domain. The sequence is that of Bifunctional protein GlmU from Acidovorax ebreus (strain TPSY) (Diaphorobacter sp. (strain TPSY)).